The sequence spans 165 residues: Choriogonadotropin subunit beta (165 aa).

Positions 1–20 (METLQGLLLWLLLSMGGAQA) are cleaved as a signal peptide. 6 cysteine pairs are disulfide-bonded: Cys-29/Cys-77, Cys-43/Cys-92, Cys-46/Cys-130, Cys-54/Cys-108, Cys-58/Cys-110, and Cys-113/Cys-120. Asn-33 and Asn-50 each carry an N-linked (GlcNAc...) asparagine glycan. The interval 131–165 (DDPNLQASSSSKDPPPSPPSPSRLLEPAGTPFLPQ) is disordered. Residues Ser-141, Ser-147, and Ser-152 are each glycosylated (O-linked (GalNAc...) serine).

It belongs to the glycoprotein hormones subunit beta family. As to quaternary structure, heterodimer of a common alpha chain and a unique beta chain which confers biological specificity to thyrotropin, lutropin, follitropin and gonadotropin. In terms of tissue distribution, placenta.

The protein resides in the secreted. Functionally, stimulates the ovaries to synthesize the steroids that are essential for the maintenance of pregnancy. The protein is Choriogonadotropin subunit beta (CGB) of Papio anubis (Olive baboon).